A 277-amino-acid chain; its full sequence is Shikimate dehydrogenase (NADP(+)) (277 aa).

Shikimate is bound by residues 17-19 and Thr64; that span reads SRS. Lys68 (proton acceptor) is an active-site residue. Residues Asn88 and Asp103 each coordinate shikimate. Residues 128 to 132, 152 to 157, and Leu217 contribute to the NADP(+) site; these read GAGGS and NRTLDR. Tyr219 serves as a coordination point for shikimate. Position 240 (Gly240) interacts with NADP(+).

Belongs to the shikimate dehydrogenase family. Homodimer.

The catalysed reaction is shikimate + NADP(+) = 3-dehydroshikimate + NADPH + H(+). It functions in the pathway metabolic intermediate biosynthesis; chorismate biosynthesis; chorismate from D-erythrose 4-phosphate and phosphoenolpyruvate: step 4/7. Involved in the biosynthesis of the chorismate, which leads to the biosynthesis of aromatic amino acids. Catalyzes the reversible NADPH linked reduction of 3-dehydroshikimate (DHSA) to yield shikimate (SA). The sequence is that of Shikimate dehydrogenase (NADP(+)) from Rhodopseudomonas palustris (strain BisB18).